A 464-amino-acid chain; its full sequence is Argininosuccinate lyase (464 aa).

This sequence belongs to the lyase 1 family. Argininosuccinate lyase subfamily.

It is found in the cytoplasm. It carries out the reaction 2-(N(omega)-L-arginino)succinate = fumarate + L-arginine. The protein operates within amino-acid biosynthesis; L-arginine biosynthesis; L-arginine from L-ornithine and carbamoyl phosphate: step 3/3. The protein is Argininosuccinate lyase of Stutzerimonas stutzeri (strain A1501) (Pseudomonas stutzeri).